Here is a 179-residue protein sequence, read N- to C-terminus: Acireductone dioxygenase (179 aa).

Fe(2+) is bound by residues His99, His101, Glu105, and His144. Ni(2+) contacts are provided by His99, His101, Glu105, and His144.

This sequence belongs to the acireductone dioxygenase (ARD) family. Monomer. Fe(2+) is required as a cofactor. Ni(2+) serves as cofactor.

It catalyses the reaction 1,2-dihydroxy-5-(methylsulfanyl)pent-1-en-3-one + O2 = 3-(methylsulfanyl)propanoate + CO + formate + 2 H(+). The catalysed reaction is 1,2-dihydroxy-5-(methylsulfanyl)pent-1-en-3-one + O2 = 4-methylsulfanyl-2-oxobutanoate + formate + 2 H(+). It functions in the pathway amino-acid biosynthesis; L-methionine biosynthesis via salvage pathway; L-methionine from S-methyl-5-thio-alpha-D-ribose 1-phosphate: step 5/6. In terms of biological role, catalyzes 2 different reactions between oxygen and the acireductone 1,2-dihydroxy-3-keto-5-methylthiopentene (DHK-MTPene) depending upon the metal bound in the active site. Fe-containing acireductone dioxygenase (Fe-ARD) produces formate and 2-keto-4-methylthiobutyrate (KMTB), the alpha-ketoacid precursor of methionine in the methionine recycle pathway. Ni-containing acireductone dioxygenase (Ni-ARD) produces methylthiopropionate, carbon monoxide and formate, and does not lie on the methionine recycle pathway. This chain is Acireductone dioxygenase, found in Exiguobacterium sibiricum (strain DSM 17290 / CCUG 55495 / CIP 109462 / JCM 13490 / 255-15).